The sequence spans 448 residues: T-box transcription factor TBX19 (448 aa).

The T-box DNA-binding region spans 45 to 218; it reads LEDAPLWQRF…YNPFAKAFLD (174 aa).

It localises to the nucleus. Its function is as follows. Transcriptional regulator involved in developmental processes. Can activate POMC gene expression and repress the alpha glycoprotein subunit and thyroid-stimulating hormone beta promoters. The chain is T-box transcription factor TBX19 from Homo sapiens (Human).